A 352-amino-acid chain; its full sequence is Adenosine deaminase (352 aa).

Residues H24 and H26 each contribute to the Zn(2+) site. Residues H26, D28, and G181 each coordinate substrate. H208 is a binding site for Zn(2+). E211 (proton donor) is an active-site residue. D290 contributes to the Zn(2+) binding site.

This sequence belongs to the metallo-dependent hydrolases superfamily. Adenosine and AMP deaminases family. Adenosine deaminase subfamily. Zn(2+) serves as cofactor.

The enzyme catalyses adenosine + H2O + H(+) = inosine + NH4(+). The catalysed reaction is 2'-deoxyadenosine + H2O + H(+) = 2'-deoxyinosine + NH4(+). In terms of biological role, catalyzes the hydrolytic deamination of adenosine and 2-deoxyadenosine. The sequence is that of Adenosine deaminase from Lactococcus lactis subsp. lactis (strain IL1403) (Streptococcus lactis).